A 459-amino-acid chain; its full sequence is Phosphomethylpyrimidine synthase (459 aa).

Substrate-binding positions include asparagine 80, methionine 109, tyrosine 139, histidine 175, serine 195–glycine 197, aspartate 236–arginine 239, and glutamate 275. Histidine 279 is a binding site for Zn(2+). A substrate-binding site is contributed by tyrosine 302. A Zn(2+)-binding site is contributed by histidine 343. Cysteine 423, cysteine 426, and cysteine 431 together coordinate [4Fe-4S] cluster.

The protein belongs to the ThiC family. [4Fe-4S] cluster is required as a cofactor.

It carries out the reaction 5-amino-1-(5-phospho-beta-D-ribosyl)imidazole + S-adenosyl-L-methionine = 4-amino-2-methyl-5-(phosphooxymethyl)pyrimidine + CO + 5'-deoxyadenosine + formate + L-methionine + 3 H(+). It functions in the pathway cofactor biosynthesis; thiamine diphosphate biosynthesis. Catalyzes the synthesis of the hydroxymethylpyrimidine phosphate (HMP-P) moiety of thiamine from aminoimidazole ribotide (AIR) in a radical S-adenosyl-L-methionine (SAM)-dependent reaction. The chain is Phosphomethylpyrimidine synthase from Prochlorococcus marinus (strain MIT 9303).